The sequence spans 740 residues: Elongation factor 2 (740 aa).

The tr-type G domain maps to 23-264; the sequence is AQIRNAGTLA…MIIEHVPPPN (242 aa). GTP contacts are provided by residues 32–39, 98–102, and 152–155; these read AHVDHGKT, DTPGH, and NKID. H605 carries the diphthamide modification.

Belongs to the TRAFAC class translation factor GTPase superfamily. Classic translation factor GTPase family. EF-G/EF-2 subfamily.

Its subcellular location is the cytoplasm. Catalyzes the GTP-dependent ribosomal translocation step during translation elongation. During this step, the ribosome changes from the pre-translocational (PRE) to the post-translocational (POST) state as the newly formed A-site-bound peptidyl-tRNA and P-site-bound deacylated tRNA move to the P and E sites, respectively. Catalyzes the coordinated movement of the two tRNA molecules, the mRNA and conformational changes in the ribosome. The chain is Elongation factor 2 from Pyrobaculum arsenaticum (strain DSM 13514 / JCM 11321 / PZ6).